The sequence spans 216 residues: Cytochrome c biogenesis ATP-binding export protein CcmA (216 aa).

An ABC transporter domain is found at 11 to 216 (VSASKLTCIR…RKIRLDYRFV (206 aa)). 43–50 (GPNGAGKT) contacts ATP.

This sequence belongs to the ABC transporter superfamily. CcmA exporter (TC 3.A.1.107) family. The complex is composed of two ATP-binding proteins (CcmA) and two transmembrane proteins (CcmB).

Its subcellular location is the cell inner membrane. It catalyses the reaction heme b(in) + ATP + H2O = heme b(out) + ADP + phosphate + H(+). Its function is as follows. Part of the ABC transporter complex CcmAB involved in the biogenesis of c-type cytochromes; once thought to export heme, this seems not to be the case, but its exact role is uncertain. Responsible for energy coupling to the transport system. This chain is Cytochrome c biogenesis ATP-binding export protein CcmA, found in Shewanella sp. (strain MR-7).